The chain runs to 685 residues: DNA ligase (685 aa).

NAD(+) contacts are provided by residues 47–51 (DSEYD), 96–97 (SL), and glutamate 125. Lysine 127 (N6-AMP-lysine intermediate) is an active-site residue. NAD(+)-binding residues include arginine 148, glutamate 185, lysine 304, and lysine 328. Zn(2+) contacts are provided by cysteine 422, cysteine 425, cysteine 440, and cysteine 446. A BRCT domain is found at 605–685 (ADAQPLKGQT…ALLALFAANR (81 aa)).

It belongs to the NAD-dependent DNA ligase family. LigA subfamily. Mg(2+) serves as cofactor. The cofactor is Mn(2+).

The catalysed reaction is NAD(+) + (deoxyribonucleotide)n-3'-hydroxyl + 5'-phospho-(deoxyribonucleotide)m = (deoxyribonucleotide)n+m + AMP + beta-nicotinamide D-nucleotide.. Functionally, DNA ligase that catalyzes the formation of phosphodiester linkages between 5'-phosphoryl and 3'-hydroxyl groups in double-stranded DNA using NAD as a coenzyme and as the energy source for the reaction. It is essential for DNA replication and repair of damaged DNA. In Shewanella putrefaciens (strain CN-32 / ATCC BAA-453), this protein is DNA ligase.